Consider the following 217-residue polypeptide: 3,4-dihydroxy-2-butanone 4-phosphate synthase (217 aa).

D-ribulose 5-phosphate contacts are provided by residues 37 to 38 (RE), Asp-42, 150 to 154 (RGGHT), and Glu-174. A Mg(2+)-binding site is contributed by Glu-38. Residue His-153 coordinates Mg(2+).

It belongs to the DHBP synthase family. In terms of assembly, homodimer. Mg(2+) is required as a cofactor. The cofactor is Mn(2+).

It carries out the reaction D-ribulose 5-phosphate = (2S)-2-hydroxy-3-oxobutyl phosphate + formate + H(+). The protein operates within cofactor biosynthesis; riboflavin biosynthesis; 2-hydroxy-3-oxobutyl phosphate from D-ribulose 5-phosphate: step 1/1. Its function is as follows. Catalyzes the conversion of D-ribulose 5-phosphate to formate and 3,4-dihydroxy-2-butanone 4-phosphate. This is 3,4-dihydroxy-2-butanone 4-phosphate synthase from Proteus mirabilis (strain HI4320).